The chain runs to 851 residues: Protein translocase subunit SecA (851 aa).

ATP-binding positions include Gln88, 106-110 (GEGKT), and Asp496. Zn(2+) contacts are provided by Cys828, Cys830, Cys839, and His840.

This sequence belongs to the SecA family. As to quaternary structure, monomer and homodimer. Part of the essential Sec protein translocation apparatus which comprises SecA, SecYEG and auxiliary proteins SecDF-YajC and YidC. Zn(2+) is required as a cofactor.

The protein resides in the cell inner membrane. Its subcellular location is the cytoplasm. It catalyses the reaction ATP + H2O + cellular proteinSide 1 = ADP + phosphate + cellular proteinSide 2.. Part of the Sec protein translocase complex. Interacts with the SecYEG preprotein conducting channel. Has a central role in coupling the hydrolysis of ATP to the transfer of proteins into and across the cell membrane, serving as an ATP-driven molecular motor driving the stepwise translocation of polypeptide chains across the membrane. This chain is Protein translocase subunit SecA, found in Helicobacter hepaticus (strain ATCC 51449 / 3B1).